Reading from the N-terminus, the 440-residue chain is Glutamate--tRNA ligase 2 (440 aa).

A 'HIGH' region motif is present at residues 8–18; sequence PSPTGYLHVGN. Residues 239-243 carry the 'KMSKS' region motif; it reads ALSKR. Lys242 is a binding site for ATP.

Belongs to the class-I aminoacyl-tRNA synthetase family. Glutamate--tRNA ligase type 1 subfamily. As to quaternary structure, monomer.

The protein resides in the cytoplasm. It carries out the reaction tRNA(Glu) + L-glutamate + ATP = L-glutamyl-tRNA(Glu) + AMP + diphosphate. In terms of biological role, catalyzes the attachment of glutamate to tRNA(Glu) in a two-step reaction: glutamate is first activated by ATP to form Glu-AMP and then transferred to the acceptor end of tRNA(Glu). The sequence is that of Glutamate--tRNA ligase 2 from Dinoroseobacter shibae (strain DSM 16493 / NCIMB 14021 / DFL 12).